A 732-amino-acid polypeptide reads, in one-letter code: Elongation factor 2 (732 aa).

The region spanning 19–260 (ERIRNMGIAA…MVVKHLPNPL (242 aa)) is the tr-type G domain. Residues 28–35 (AHIDHGKT), 94–98 (DTPGH), and 148–151 (NKVD) each bind GTP. His597 bears the Diphthamide mark.

The protein belongs to the TRAFAC class translation factor GTPase superfamily. Classic translation factor GTPase family. EF-G/EF-2 subfamily.

It localises to the cytoplasm. Catalyzes the GTP-dependent ribosomal translocation step during translation elongation. During this step, the ribosome changes from the pre-translocational (PRE) to the post-translocational (POST) state as the newly formed A-site-bound peptidyl-tRNA and P-site-bound deacylated tRNA move to the P and E sites, respectively. Catalyzes the coordinated movement of the two tRNA molecules, the mRNA and conformational changes in the ribosome. The polypeptide is Elongation factor 2 (Thermococcus kodakarensis (strain ATCC BAA-918 / JCM 12380 / KOD1) (Pyrococcus kodakaraensis (strain KOD1))).